A 406-amino-acid chain; its full sequence is Lysophospholipid transporter LplT (406 aa).

11 helical membrane passes run M16–A36, I53–A73, A91–V111, M139–A159, M164–I184, L227–L247, A253–A273, C285–M305, L310–L330, L349–G369, and V372–G392.

The protein belongs to the major facilitator superfamily. LplT (TC 2.A.1.42) family.

Its subcellular location is the cell inner membrane. Its function is as follows. Catalyzes the facilitated diffusion of 2-acyl-glycero-3-phosphoethanolamine (2-acyl-GPE) into the cell. The sequence is that of Lysophospholipid transporter LplT from Yersinia pestis bv. Antiqua (strain Antiqua).